A 98-amino-acid chain; its full sequence is Peptide YY (98 aa).

A signal peptide spans 1 to 28 (MVAVRRPWPVTVAMLLILLACLGALVDA). Position 41 is a phosphoserine (serine 41). At tyrosine 64 the chain carries Tyrosine amide. A propeptide spanning residues 68–98 (DVPAALFSKLLFTDDSDSENLPFRPEGLDQW) is cleaved from the precursor.

This sequence belongs to the NPY family. Post-translationally, the peptide YY form is cleaved at Pro-30 by the prolyl endopeptidase FAP (seprase) activity (in vitro) to generate peptide YY(3-36).

It localises to the secreted. This gut peptide inhibits exocrine pancreatic secretion, has a vasoconstrictory action and inhibitis jejunal and colonic mobility. The chain is Peptide YY (Pyy) from Mus musculus (Mouse).